The chain runs to 335 residues: Dolichyl-diphosphooligosaccharide--protein glycosyltransferase subunit MAGT1 (335 aa).

A signal peptide spans 1-29; it reads MAARWRFWCVSVTMVVALLIVCDVPSASA. Topologically, residues 30 to 184 are extracellular; sequence QRKKEMVLSE…DVNIRVIRPP (155 aa). Residues 47-175 form the Thioredoxin domain; the sequence is WTNKRPVIRM…IARWIADRTD (129 aa). Residue asparagine 71 is glycosylated (N-linked (GlcNAc...) asparagine). The cysteines at positions 87 and 90 are disulfide-linked. A helical membrane pass occupies residues 185 to 205; sequence NYAGPLMLGLLLAVIGGLVYL. At 206–209 the chain is on the cytoplasmic side; it reads RRSN. A helical transmembrane segment spans residues 210–230; it reads MEFLFNKTGWAFAALCFVLAM. Over 231–270 the chain is Extracellular; it reads TSGQMWNHIRGPPYAHKNPHTGHVNYIHGSSQAQFVAETH. Residues 271 to 291 traverse the membrane as a helical segment; sequence IVLLFNGGVTLGMVLLCEAAT. The Cytoplasmic segment spans residues 292–300; it reads SDMDIGKRK. Residues 301 to 321 form a helical membrane-spanning segment; that stretch reads IMCVAGIGLVVLFFSWMLSIF. At 322 to 335 the chain is on the extracellular side; that stretch reads RSKYHGYPYSFLMS.

This sequence belongs to the OST3/OST6 family. As to quaternary structure, accessory component of the STT3B-containing form of the oligosaccharyltransferase (OST) complex. OST exists in two different complex forms which contain common core subunits RPN1, RPN2, OST48, OST4, DAD1 and TMEM258, either STT3A or STT3B as catalytic subunits, and form-specific accessory subunits. OST can form stable complexes with the Sec61 complex or with both the Sec61 and TRAP complexes. The association of TUSC3 or MAGT1 with the STT3B-containing complex seems to be mutually exclusvice. Ubiquitous. Expressed at very low levels in brain, lung and kidney.

It localises to the cell membrane. The protein localises to the endoplasmic reticulum. The protein resides in the endoplasmic reticulum membrane. Its pathway is protein modification; protein glycosylation. In terms of biological role, accessory component of the STT3B-containing form of the N-oligosaccharyl transferase (OST) complex which catalyzes the transfer of a high mannose oligosaccharide from a lipid-linked oligosaccharide donor to an asparagine residue within an Asn-X-Ser/Thr consensus motif in nascent polypeptide chains. Involved in N-glycosylation of STT3B-dependent substrates. Specifically required for the glycosylation of a subset of acceptor sites that are near cysteine residues; in this function seems to act redundantly with TUSC3. In its oxidized form proposed to form transient mixed disulfides with a glycoprotein substrate to facilitate access of STT3B to the unmodified acceptor site. Also has oxidoreductase-independent functions in the STT3B-containing OST complex possibly involving substrate recognition. Could indirectly play a role in Mg(2+) transport in epithelial cells. This chain is Dolichyl-diphosphooligosaccharide--protein glycosyltransferase subunit MAGT1, found in Homo sapiens (Human).